We begin with the raw amino-acid sequence, 475 residues long: Ribulose bisphosphate carboxylase large chain (475 aa).

The propeptide occupies 1-2 (MS). N-acetylproline is present on Pro-3. Lys-14 is subject to N6,N6,N6-trimethyllysine. 2 residues coordinate substrate: Asn-123 and Thr-173. The Proton acceptor role is filled by Lys-175. Lys-177 contributes to the substrate binding site. Residues Lys-201, Asp-203, and Glu-204 each coordinate Mg(2+). At Lys-201 the chain carries N6-carboxylysine. The Proton acceptor role is filled by His-294. Substrate is bound by residues Arg-295, His-327, and Ser-379.

Belongs to the RuBisCO large chain family. Type I subfamily. Heterohexadecamer of 8 large chains and 8 small chains; disulfide-linked. The disulfide link is formed within the large subunit homodimers. It depends on Mg(2+) as a cofactor. The disulfide bond which can form in the large chain dimeric partners within the hexadecamer appears to be associated with oxidative stress and protein turnover.

The protein resides in the plastid. Its subcellular location is the chloroplast. It catalyses the reaction 2 (2R)-3-phosphoglycerate + 2 H(+) = D-ribulose 1,5-bisphosphate + CO2 + H2O. The enzyme catalyses D-ribulose 1,5-bisphosphate + O2 = 2-phosphoglycolate + (2R)-3-phosphoglycerate + 2 H(+). Functionally, ruBisCO catalyzes two reactions: the carboxylation of D-ribulose 1,5-bisphosphate, the primary event in carbon dioxide fixation, as well as the oxidative fragmentation of the pentose substrate in the photorespiration process. Both reactions occur simultaneously and in competition at the same active site. In Angiopteris lygodiifolia (Turnip fern), this protein is Ribulose bisphosphate carboxylase large chain.